A 294-amino-acid chain; its full sequence is Deubiquitinase OTUD6B (294 aa).

Disordered regions lie at residues 1 to 46 (MDEA…RKQL) and 67 to 120 (AFAQ…ERDE). Composition is skewed to polar residues over residues 27-36 (KIQSMKNSVP) and 73-86 (PEPT…NGVT). A compositionally biased stretch (basic and acidic residues) spans 111–120 (KAAQEKERDE). Residues 150–287 (LQIRQIPSDG…GEHYNSVELL (138 aa)) form the OTU domain. Positions 155-161 (IPSDGHC) are cys-loop. Aspartate 158 is an active-site residue. Cysteine 161 serves as the catalytic Nucleophile. The segment at 222 to 232 (IVNTPAWGGQL) is variable-loop. Residues 270 to 280 (YMRHAYGLGEH) form a his-loop region. Histidine 280 is an active-site residue.

The enzyme catalyses Thiol-dependent hydrolysis of ester, thioester, amide, peptide and isopeptide bonds formed by the C-terminal Gly of ubiquitin (a 76-residue protein attached to proteins as an intracellular targeting signal).. In terms of biological role, deubiquitinating enzyme that may play a role in the ubiquitin-dependent regulation of different cellular processes. This chain is Deubiquitinase OTUD6B (otud6b), found in Xenopus tropicalis (Western clawed frog).